A 389-amino-acid polypeptide reads, in one-letter code: Rhizopuspepsin-1 (389 aa).

A signal peptide spans 1 to 21; sequence MKFTLISSCVALAAMTLAVEA. The propeptide at 22 to 66 is activation peptide; that stretch reads APNGKKINIPLAKNNSYKPSAKNALNKALAKYNRRKVGSGGITTE. The region spanning 82–385 is the Peptidase A1 domain; it reads YYGEVTVGTP…NQEVPEVQIA (304 aa). Asp100 is an active-site residue. Cys113 and Cys116 are disulfide-bonded. Asp283 is an active-site residue. The cysteines at positions 317 and 350 are disulfide-linked.

The protein belongs to the peptidase A1 family.

The enzyme catalyses Hydrolysis of proteins with broad specificity similar to that of pepsin A, preferring hydrophobic residues at P1 and P1'. Clots milk and activates trypsinogen. Does not cleave 4-Gln-|-His-5, but does cleave 10-His-|-Leu-11 and 12-Val-|-Glu-13 in B chain of insulin.. This is Rhizopuspepsin-1 (RNAP) from Rhizopus niveus.